A 215-amino-acid polypeptide reads, in one-letter code: ATP phosphoribosyltransferase (215 aa).

This sequence belongs to the ATP phosphoribosyltransferase family. Short subfamily. Heteromultimer composed of HisG and HisZ subunits.

The protein resides in the cytoplasm. It catalyses the reaction 1-(5-phospho-beta-D-ribosyl)-ATP + diphosphate = 5-phospho-alpha-D-ribose 1-diphosphate + ATP. The protein operates within amino-acid biosynthesis; L-histidine biosynthesis; L-histidine from 5-phospho-alpha-D-ribose 1-diphosphate: step 1/9. Functionally, catalyzes the condensation of ATP and 5-phosphoribose 1-diphosphate to form N'-(5'-phosphoribosyl)-ATP (PR-ATP). Has a crucial role in the pathway because the rate of histidine biosynthesis seems to be controlled primarily by regulation of HisG enzymatic activity. The protein is ATP phosphoribosyltransferase of Gloeothece citriformis (strain PCC 7424) (Cyanothece sp. (strain PCC 7424)).